A 264-amino-acid chain; its full sequence is Thymidylate synthase 2 (264 aa).

Residue R21 participates in dUMP binding. H51 is a binding site for (6R)-5,10-methylene-5,6,7,8-tetrahydrofolate. 126–127 is a dUMP binding site; sequence RR. C146 acts as the Nucleophile in catalysis. DUMP-binding positions include 166-169, N177, and 207-209; these read RSAD and HIY. D169 contacts (6R)-5,10-methylene-5,6,7,8-tetrahydrofolate. S263 lines the (6R)-5,10-methylene-5,6,7,8-tetrahydrofolate pocket.

It belongs to the thymidylate synthase family. Bacterial-type ThyA subfamily. In terms of assembly, homodimer.

Its subcellular location is the cytoplasm. It carries out the reaction dUMP + (6R)-5,10-methylene-5,6,7,8-tetrahydrofolate = 7,8-dihydrofolate + dTMP. Its pathway is pyrimidine metabolism; dTTP biosynthesis. In terms of biological role, catalyzes the reductive methylation of 2'-deoxyuridine-5'-monophosphate (dUMP) to 2'-deoxythymidine-5'-monophosphate (dTMP) while utilizing 5,10-methylenetetrahydrofolate (mTHF) as the methyl donor and reductant in the reaction, yielding dihydrofolate (DHF) as a by-product. This enzymatic reaction provides an intracellular de novo source of dTMP, an essential precursor for DNA biosynthesis. The chain is Thymidylate synthase 2 from Bacillus amyloliquefaciens (Bacillus velezensis).